The chain runs to 130 residues: Protein ApaG (130 aa).

Residues 3–127 (STITRDIQIT…FSLDSPFSRQ (125 aa)) form the ApaG domain.

This chain is Protein ApaG, found in Beijerinckia indica subsp. indica (strain ATCC 9039 / DSM 1715 / NCIMB 8712).